Consider the following 262-residue polypeptide: Putative protein-methionine-sulfoxide reductase subunit YedZ1 (262 aa).

The protein belongs to the MsrP family.

Part of the YedY1-YedZ1 system that may repair oxidized proteins containing methionine sulfoxide residues (Met-O). In Azospira oryzae (strain ATCC BAA-33 / DSM 13638 / PS) (Dechlorosoma suillum), this protein is Putative protein-methionine-sulfoxide reductase subunit YedZ1.